Here is a 613-residue protein sequence, read N- to C-terminus: Probable hydrolase clz13 (613 aa).

A signal peptide spans 1–25 (MCLLSMRFTVAILLVLLSHCGGSHA). N-linked (GlcNAc...) asparagine glycans are attached at residues Asn-61, Asn-89, Asn-286, Asn-422, Asn-456, Asn-477, and Asn-581.

It belongs to the beta-lactamase family.

The protein operates within secondary metabolite biosynthesis. Its function is as follows. Probable hydrolase; part of the gene cluster that mediates the biosynthesis of squalestatin S1 (SQS1, also known as zaragozic acid A), a heavily oxidized fungal polyketide that offers potent cholesterol lowering activity by targeting squalene synthase (SS). SQS1 is composed of a 2,8-dioxobicyclic[3.2.1]octane-3,4,5-tricarboxyclic acid core that is connected to two lipophilic polyketide arms. These initial steps feature the priming of an unusual benzoic acid starter unit onto the highly reducing polyketide synthase clz14, followed by oxaloacetate extension and product release to generate a tricarboxylic acid containing product. The phenylalanine ammonia lyase (PAL) clz10 and the acyl-CoA ligase clz12 are involved in transforming phenylalanine into benzoyl-CoA. The citrate synthase-like protein clz17 is involved in connecting the C-alpha-carbons of the hexaketide chain and oxaloacetate to afford the tricarboxylic acid unit. The potential hydrolytic enzymes, clz11 and clz13, are in close proximity to pks2 and may participate in product release. On the other side, the tetraketide arm is synthesized by a the squalestatin tetraketide synthase clz2 and enzymatically esterified to the core in the last biosynthetic step, by the acetyltransferase clz6. The biosynthesis of the tetraketide must involve 3 rounds of chain extension. After the first and second rounds methyl-transfer occurs, and in all rounds of extension the ketoreductase and dehydratase are active. The enoyl reductase and C-MeT of clz2 are not active in the final round of extension. The acetyltransferase clz6 appears to have a broad substrate selectivity for its acyl CoA substrate, allowing the in vitro synthesis of novel squalestatins. The biosynthesis of SQS1 requires several oxidative steps likely performed by oxidoreductases clz3, clz15 and clz16. Finally, in support of the identification of the cluster as being responsible for SQS1 production, the cluster contains a gene encoding a putative squalene synthase (SS) clz20, suggesting a likely mechanism for self-resistance. The sequence is that of Probable hydrolase clz13 from Cochliobolus lunatus (Filamentous fungus).